The following is a 645-amino-acid chain: 1,4-alpha-glucan branching enzyme GlgB (645 aa).

Asp-309 serves as the catalytic Nucleophile. The Proton donor role is filled by Glu-352. The tract at residues 619–645 is disordered; sequence VKTRKGSKKQDGSKTKVRSNVTSRGKR. Over residues 636 to 645 the composition is skewed to polar residues; that stretch reads RSNVTSRGKR.

The protein belongs to the glycosyl hydrolase 13 family. GlgB subfamily. As to quaternary structure, monomer.

It carries out the reaction Transfers a segment of a (1-&gt;4)-alpha-D-glucan chain to a primary hydroxy group in a similar glucan chain.. Its pathway is glycan biosynthesis; glycogen biosynthesis. Its function is as follows. Catalyzes the formation of the alpha-1,6-glucosidic linkages in glycogen by scission of a 1,4-alpha-linked oligosaccharide from growing alpha-1,4-glucan chains and the subsequent attachment of the oligosaccharide to the alpha-1,6 position. In Bacillus mycoides (strain KBAB4) (Bacillus weihenstephanensis), this protein is 1,4-alpha-glucan branching enzyme GlgB.